Reading from the N-terminus, the 314-residue chain is A-kinase anchor protein 7 isoform gamma (314 aa).

The interval 1–46 (MPFAAVDIQDDCGSPDVPQANPKRSKEEEEDRGDKNDHVKKRKKAK) is disordered. The span at 24–37 (RSKEEEEDRGDKND) shows a compositional bias: basic and acidic residues. AMP contacts are provided by residues T95 and 185-187 (HLT). Residues T95 and 185-187 (HLT) each bind CMP. Positions 260 to 314 (AELVRLSKRLVENAVLKAVQQYLEETQNKKQPGEGNSTKAEEGDRNGDGSDNNRK) are PKA-RII-alpha subunit binding domain. Residues 261 to 285 (ELVRLSKRLVENAVLKAVQQYLEET) form an RI-alpha-binding region. An RII-binding region spans residues 262-275 (LVRLSKRLVENAVL). The interval 281 to 314 (YLEETQNKKQPGEGNSTKAEEGDRNGDGSDNNRK) is disordered. Over residues 298–314 (KAEEGDRNGDGSDNNRK) the composition is skewed to basic and acidic residues.

Binds cAMP-dependent protein kinase (PKA). Interacts with PRKCA; only the cytoplasmic form is capable of interacting with PRKCA. As to expression, expressed in oocytes.

Its subcellular location is the nucleus. It is found in the cytoplasm. Functionally, probably targets cAMP-dependent protein kinase (PKA) to the cellular membrane or cytoskeletal structures. The membrane-associated form reduces epithelial sodium channel (ENaC) activity, whereas the free cytoplasmic form may negatively regulate ENaC channel feedback inhibition by intracellular sodium. This chain is A-kinase anchor protein 7 isoform gamma, found in Mus musculus (Mouse).